A 367-amino-acid chain; its full sequence is Cycloaraneosene synthase sdnA (367 aa).

The N-terminal stretch at 1 to 24 is a signal peptide; the sequence is MSLYGLFTLATSYLPSVGGGAALA. Residues aspartate 115, asparagine 260, and serine 264 each contribute to the Mg(2+) site. The DDXXD motif signature appears at 115 to 119; the sequence is DDQFD. A glycan (N-linked (GlcNAc...) asparagine) is linked at asparagine 276.

This sequence belongs to the terpene synthase family. The cofactor is Mg(2+).

The enzyme catalyses (2E,6E,10E)-geranylgeranyl diphosphate = cycloaraneosene + diphosphate. It functions in the pathway antibiotic biosynthesis. Functionally, cycloaraneosene synthase; part of the gene cluster that mediates the biosynthesis of sordarin and hypoxysordarin, glycoside antibiotics with a unique tetracyclic diterpene aglycone structure. First, the geranylgeranyl diphosphate synthase sdnC constructs GGDP from farnesyl diphosphate and isopentenyl diphosphate. The diterpene cyclase sdnA then catalyzes the cyclization of GGDP to afford cycloaraneosene. Cycloaraneosene is then hydroxylated four times by the putative cytochrome P450 monooxygenases sdnB, sdnE, sdnF and sdnH to give a hydroxylated cycloaraneosene derivative such as cycloaraneosene-8,9,13,19-tetraol. Although the order of the hydroxylations is unclear, at least C8, C9 and C13 of the cycloaraneosene skeleton are hydroxylated before the sordaricin formation. Dehydration of the 13-hydroxy group of the hydroxylated cycloaraneosene derivative might be catalyzed by an unassigned hypothetical protein such as sdnG and sdnP to construct the cyclopentadiene moiety. The FAD-dependent oxidoreductase sdnN is proposed to catalyze the oxidation at C9 of the hydroxylated cycloaraneosene derivative and also catalyze the Baeyer-Villiger oxidation to give the lactone intermediate. The presumed lactone intermediate would be hydrolyzed to give an acrolein moiety and a carboxylate moiety. Then, [4+2]cycloaddition would occur between the acrolein moiety and the cyclopentadiene moiety to give sordaricin. SdnN might also be involved in the [4+2]cycloaddition after the hypothesized oxidation to accommodate the oxidized product and prompt the [4+2]cycloaddition. GDP-6-deoxy-D-altrose may be biosynthesized from GDP-D-mannose by the putative GDP-mannose-4,6-dehydratase sdnI and the short-chain dehydrogenase sdnK. The glycosyltransferase sdnJ catalyzes the attachment of 6-deoxy-D-altrose onto the 19-hydroxy group of sordaricin to give 4'-O-demethylsordarin. The methyltransferase sdnD would complete the biosynthesis of sordarin. Sordarin can be further modified into hypoxysordarin. The unique acyl chain at the 3'-hydroxy group of hypoxysordarin would be constructed by an iterative type I PKS sdnO and the trans-acting polyketide methyltransferase sdnL. SdnL would be responsible for the introduction of an alpha-methyl group of the polyketide chain. Alternatively, the beta-lactamase-like protein sdnR might be responsible for the cleavage and transfer of the polyketide chain from the PKS sdnO to sordarin. Two putative cytochrome P450 monooxygenases, sdnQ and sdnT, might catalyze the epoxidations of the polyketide chain to complete the biosynthesis of hypoxysordarin. Transcriptional regulators sdnM and sdnS are presumably encoded for the transcriptional regulation of the expression of the sdn gene cluster. The protein is Cycloaraneosene synthase sdnA of Sordaria araneosa (Pleurage araneosa).